The following is a 563-amino-acid chain: Putative cytochrome c oxidase subunit 1-beta (563 aa).

Helical transmembrane passes span 34–54 (IGHLYLITSFAFFLIGGVMAL), 76–96 (LFTLHGTIMLLLFATPTFAGF), 117–137 (MLSYWLFLFGGLIVLGSLAVP), 164–184 (MWIMGLALAGFGTILGSVNFL), 208–228 (LFTSILVLMAFPVLAAALLVL), 252–272 (LFWFFGHPEVYIIALPFFGII), and 284–304 (IFGYLTLIGATAAITGLSVVV). A Fe(II)-heme a-binding site is contributed by H80. Cu cation-binding residues include H258 and Y262. Residues 258–262 (HPEVY) constitute a cross-link (1'-histidyl-3'-tyrosine (His-Tyr)). Residues H307 and H308 each contribute to the Cu cation site. The next 2 helical transmembrane spans lie at 309–329 (MFATGAVLLPFFSFMSFLIAV) and 353–373 (MLWATGFLVSFLFGGLTGVIL). H391 lines the heme a3 pocket. 3 consecutive transmembrane segments (helical) span residues 392 to 412 (FHYVVFGTVVFATFGGFYFWW), 427 to 447 (IHFWTLFVGFHTTFLVQHWLG), and 470 to 490 (LSTIGAFLLGMSTLPFLYNVW). H393 contacts Fe(II)-heme a. The segment at 536–563 (AFDLHHPAHAGEAPQPEPKHEQADREPS) is disordered. The span at 552 to 563 (EPKHEQADREPS) shows a compositional bias: basic and acidic residues.

This sequence belongs to the heme-copper respiratory oxidase family. As to quaternary structure, associates with subunits II, III and IV to form cytochrome c oxidase. The cofactor is Cu(2+). It depends on heme as a cofactor.

Its subcellular location is the cell membrane. It catalyses the reaction 4 Fe(II)-[cytochrome c] + O2 + 8 H(+)(in) = 4 Fe(III)-[cytochrome c] + 2 H2O + 4 H(+)(out). The protein operates within energy metabolism; oxidative phosphorylation. In terms of biological role, cytochrome c oxidase is the component of the respiratory chain that catalyzes the reduction of oxygen to water. Subunits 1-3 form the functional core of the enzyme complex. CO I is the catalytic subunit of the enzyme. Electrons originating in cytochrome c are transferred via the copper A center of subunit 2 and heme A of subunit 1 to the bimetallic center formed by heme A3 and copper B. The sequence is that of Putative cytochrome c oxidase subunit 1-beta (ctaD2) from Streptomyces avermitilis (strain ATCC 31267 / DSM 46492 / JCM 5070 / NBRC 14893 / NCIMB 12804 / NRRL 8165 / MA-4680).